The following is a 102-amino-acid chain: Protein GOLVEN 4 (102 aa).

A signal peptide spans 1 to 27 (MEMKKWSYANLITLALLFLFFIILLLA). A propeptide spanning residues 28-89 (FQGGSRDDDH…QEREVYVELR (62 aa)) is cleaved from the precursor. Residues 56-78 (KSLKPINPTKKNGFEYPDQGSHD) form a disordered region. Tyr91 is modified (sulfotyrosine). Residue Pro99 is modified to Hydroxyproline.

It belongs to the RGF family. In terms of assembly, binds to LRR receptor-like serine/threonine-protein kinases to trigger their dimerization with SERK proteins and subsequent signaling. In terms of tissue distribution, expressed in roots and sepals.

Its subcellular location is the secreted. Functionally, signaling peptide (root growth factor) that promotes root hairs formation and growth. Maintains the postembryonic root stem cell niche. Regulates the pattern of root growth and lateral root development by modulating the length and the number of cortical cells in the root apical meristem (RAM), and the anticlinal asymmetric cell divisions in lateral root initiation cells. This chain is Protein GOLVEN 4, found in Arabidopsis thaliana (Mouse-ear cress).